A 270-amino-acid polypeptide reads, in one-letter code: 3-phenylpropionate-dihydrodiol/cinnamic acid-dihydrodiol dehydrogenase (270 aa).

10 to 34 contributes to the NAD(+) binding site; that stretch reads FITGGGSGLGLALVERFIEEGAQVA. Substrate is bound at residue Ser-143. The active-site Proton acceptor is the Tyr-156.

This sequence belongs to the short-chain dehydrogenases/reductases (SDR) family.

The enzyme catalyses 3-(cis-5,6-dihydroxycyclohexa-1,3-dien-1-yl)propanoate + NAD(+) = 3-(2,3-dihydroxyphenyl)propanoate + NADH + H(+). It catalyses the reaction (2E)-3-(cis-5,6-dihydroxycyclohexa-1,3-dien-1-yl)prop-2-enoate + NAD(+) = (2E)-3-(2,3-dihydroxyphenyl)prop-2-enoate + NADH + H(+). It functions in the pathway aromatic compound metabolism; 3-phenylpropanoate degradation. Functionally, converts 3-phenylpropionate-dihydrodiol (PP-dihydrodiol) and cinnamic acid-dihydrodiol (CI-dihydrodiol) into 3-(2,3-dihydroxylphenyl)propanoic acid (DHPP) and 2,3-dihydroxicinnamic acid (DHCI), respectively. This is 3-phenylpropionate-dihydrodiol/cinnamic acid-dihydrodiol dehydrogenase from Shigella sonnei (strain Ss046).